The primary structure comprises 356 residues: Fructose-1,6-bisphosphatase class 1 (356 aa).

The segment at M1–L26 is disordered. Mg(2+) is bound by residues E101, D120, L122, and D123. Residues D123 to S126 and N211 each bind substrate. A Mg(2+)-binding site is contributed by E283.

This sequence belongs to the FBPase class 1 family. As to quaternary structure, homotetramer. Mg(2+) is required as a cofactor.

It is found in the cytoplasm. The enzyme catalyses beta-D-fructose 1,6-bisphosphate + H2O = beta-D-fructose 6-phosphate + phosphate. Its pathway is carbohydrate biosynthesis; Calvin cycle. This Bradyrhizobium sp. (strain ORS 278) protein is Fructose-1,6-bisphosphatase class 1.